Here is a 272-residue protein sequence, read N- to C-terminus: Endoplasmic reticulum resident protein 27 (272 aa).

The signal sequence occupies residues 1–25 (MEAMPSRCLFLLFLSTCKLSPEVVA). Positions 38-151 (EPMRLTDVQA…LVTEYNAITA (114 aa)) constitute a Thioredoxin domain. The N-linked (GlcNAc...) asparagine glycan is linked to Asn-99. Positions 229–232 (DKWD) are PDIA3-binding site. Positions 269-272 (KVEL) match the Prevents secretion from ER motif.

It belongs to the protein disulfide isomerase family. As to quaternary structure, interacts with PDIA3.

The protein resides in the endoplasmic reticulum lumen. Its function is as follows. Specifically binds unfolded proteins and may recruit protein disulfide isomerase PDIA3 to unfolded substrates. Binds protein substrates via a hydrophobic pocket in the C-terminal domain. May play a role in the unfolded stress response. The sequence is that of Endoplasmic reticulum resident protein 27 (ERP27) from Bos taurus (Bovine).